Reading from the N-terminus, the 309-residue chain is tRNA dimethylallyltransferase (309 aa).

Position 11–18 (11–18 (GPTASGKS)) interacts with ATP. Position 13-18 (13-18 (TASGKS)) interacts with substrate. 2 interaction with substrate tRNA regions span residues 36 to 39 (DSMQ) and 160 to 164 (QRLLR).

It belongs to the IPP transferase family. Monomer. It depends on Mg(2+) as a cofactor.

It catalyses the reaction adenosine(37) in tRNA + dimethylallyl diphosphate = N(6)-dimethylallyladenosine(37) in tRNA + diphosphate. Catalyzes the transfer of a dimethylallyl group onto the adenine at position 37 in tRNAs that read codons beginning with uridine, leading to the formation of N6-(dimethylallyl)adenosine (i(6)A). This chain is tRNA dimethylallyltransferase, found in Caulobacter sp. (strain K31).